Here is a 437-residue protein sequence, read N- to C-terminus: Na(+)/H(+) antiporter NhaA (437 aa).

The next 11 helical transmembrane spans lie at 29-49, 74-94, 111-131, 139-159, 168-188, 196-216, 229-249, 307-327, 341-361, 376-396, and 411-431; these read TAGI…NTAW, LKHW…ALEL, LPVA…LLLV, GWGT…ALLG, LFLL…VAVG, VALG…LLGI, IWLA…ILGL, IALH…SNAG, IAIV…FSFL, WSLL…ALFI, and LGVL…LTLL.

It belongs to the NhaA Na(+)/H(+) (TC 2.A.33) antiporter family.

It localises to the cell inner membrane. The enzyme catalyses Na(+)(in) + 2 H(+)(out) = Na(+)(out) + 2 H(+)(in). Na(+)/H(+) antiporter that extrudes sodium in exchange for external protons. This chain is Na(+)/H(+) antiporter NhaA, found in Rhizobium meliloti (strain 1021) (Ensifer meliloti).